Here is a 366-residue protein sequence, read N- to C-terminus: Ribosomal RNA large subunit methyltransferase M (366 aa).

S-adenosyl-L-methionine is bound by residues serine 188, 221-224, aspartate 240, aspartate 260, and aspartate 277; that span reads CPGG. The Proton acceptor role is filled by lysine 306.

It belongs to the class I-like SAM-binding methyltransferase superfamily. RNA methyltransferase RlmE family. RlmM subfamily. Monomer.

The protein resides in the cytoplasm. It carries out the reaction cytidine(2498) in 23S rRNA + S-adenosyl-L-methionine = 2'-O-methylcytidine(2498) in 23S rRNA + S-adenosyl-L-homocysteine + H(+). Functionally, catalyzes the 2'-O-methylation at nucleotide C2498 in 23S rRNA. In Dickeya chrysanthemi (strain Ech1591) (Dickeya zeae (strain Ech1591)), this protein is Ribosomal RNA large subunit methyltransferase M.